The primary structure comprises 371 residues: Vasopressin V2 receptor (371 aa).

The interval 1-30 is disordered; sequence MLMASTTSAVPGHPSLPSLPSNSSQERPLD. The Extracellular portion of the chain corresponds to 1-38; the sequence is MLMASTTSAVPGHPSLPSLPSNSSQERPLDTRDPLLAR. The span at 15–24 shows a compositional bias: low complexity; sequence SLPSLPSNSS. The N-linked (GlcNAc...) asparagine glycan is linked to asparagine 22. Residues 39–63 form a helical membrane-spanning segment; the sequence is AELALLSIVFVAVALSNGLVLAALA. Residues 64-77 are Cytoplasmic-facing; the sequence is RRGRRGHWAPIHVF. The chain crosses the membrane as a helical span at residues 78-98; it reads IGHLCLADLAVALFQVLPQLA. Topologically, residues 99–113 are extracellular; the sequence is WKATDRFRGPDALCR. A helical transmembrane segment spans residues 114 to 135; it reads AVKYLQMVGMYASSYMILAMTL. Over 136 to 159 the chain is Cytoplasmic; that stretch reads DRHRAICRPMLAYRHGSGAHWNRP. A helical membrane pass occupies residues 160 to 180; it reads VLVAWAFSLLLSLPQLFIFAQ. Residues 181–200 lie on the Extracellular side of the membrane; it reads RNVEGGSGVTDCWACFAEPW. A helical transmembrane segment spans residues 201–220; sequence GRRTYVTWIALMVFVAPTLG. Residues 221–271 lie on the Cytoplasmic side of the membrane; the sequence is IAACQVLIFREIHASLVPGPSERPGGRRRGRRTGSPGEGAHVSAAVAKTVR. The disordered stretch occupies residues 240-259; it reads PSERPGGRRRGRRTGSPGEG. The helical transmembrane segment at 272–293 threads the bilayer; the sequence is MTLVIVVVYVLCWAPFFLVQLW. At 294 to 308 the chain is on the extracellular side; the sequence is AAWDPEAPLEGAPFV. A helical transmembrane segment spans residues 309-328; the sequence is LLMLLASLNSCTNPWIYASF. Residues 329-371 are Cytoplasmic-facing; it reads SSSVSSELRSLLCCARGRTPPSLGPQDESCTTASSSLAKDTSS. 2 S-palmitoyl cysteine lipidation sites follow: cysteine 341 and cysteine 342. Positions 349 to 371 are disordered; sequence PSLGPQDESCTTASSSLAKDTSS. Over residues 356–371 the composition is skewed to polar residues; the sequence is ESCTTASSSLAKDTSS.

The protein belongs to the G-protein coupled receptor 1 family. Vasopressin/oxytocin receptor subfamily. Interacts with ARRDC4. Identified in a complex containing at least ARRDC4, V2R and HGS. Interacts with TMEM147. Kidney.

It localises to the cell membrane. In terms of biological role, receptor for arginine vasopressin. The activity of this receptor is mediated by G proteins which activate adenylate cyclase. Involved in renal water reabsorption. In Homo sapiens (Human), this protein is Vasopressin V2 receptor (AVPR2).